The chain runs to 253 residues: Claudin domain-containing protein 1 (253 aa).

The chain crosses the membrane as a helical span at residues 5 to 25; sequence FATAFVIACVLSLISTIYMAA. N-linked (GlcNAc...) asparagine glycans are attached at residues Asn-42 and Asn-72. Helical transmembrane passes span 141–161, 175–195, and 216–236; these read FLLPFVSLGLMCFGALIGLCA, ILHLLAGLCTLGSVSCYVAGI, and FCLACVSAPLQFMASALFIWA.

It belongs to the PMP-22/EMP/MP20 family.

It is found in the cell junction. Its subcellular location is the tight junction. It localises to the cell membrane. In terms of biological role, plays a role in negatively regulating the permeability of cells to small molecules. This Macaca fascicularis (Crab-eating macaque) protein is Claudin domain-containing protein 1 (CLDND1).